Consider the following 260-residue polypeptide: Voltage-dependent calcium channel gamma-6 subunit (260 aa).

The next 4 helical transmembrane spans lie at 43–63, 143–163, 169–189, and 221–241; these read LLVA…EFWV, VIAV…IMVL, FLLR…FVSL, and LGCG…FLLL.

This sequence belongs to the PMP-22/EMP/MP20 family. CACNG subfamily. As to quaternary structure, interacts with CACNA1C. Identified in a complex with the L-type calcium channel subunits CACNA1C, CACNA2D1 and either CACNB1 or CACNB2. In terms of tissue distribution, detected in heart atrium and ventricle, aorta and skeletal muscle. Detected in heart left ventricle.

The protein localises to the cell membrane. Regulates the activity of L-type calcium channels that contain CACNA1C as pore-forming subunit. This chain is Voltage-dependent calcium channel gamma-6 subunit (Cacng6), found in Rattus norvegicus (Rat).